A 120-amino-acid chain; its full sequence is NAD(P)H-quinone oxidoreductase subunit 3, chloroplastic (120 aa).

Transmembrane regions (helical) follow at residues 9–29 (IFWA…LISG), 64–84 (MFAL…PWAM), and 88–108 (VLGV…IVGS).

This sequence belongs to the complex I subunit 3 family. NDH is composed of at least 16 different subunits, 5 of which are encoded in the nucleus.

The protein resides in the plastid. The protein localises to the chloroplast thylakoid membrane. It catalyses the reaction a plastoquinone + NADH + (n+1) H(+)(in) = a plastoquinol + NAD(+) + n H(+)(out). The catalysed reaction is a plastoquinone + NADPH + (n+1) H(+)(in) = a plastoquinol + NADP(+) + n H(+)(out). In terms of biological role, NDH shuttles electrons from NAD(P)H:plastoquinone, via FMN and iron-sulfur (Fe-S) centers, to quinones in the photosynthetic chain and possibly in a chloroplast respiratory chain. The immediate electron acceptor for the enzyme in this species is believed to be plastoquinone. Couples the redox reaction to proton translocation, and thus conserves the redox energy in a proton gradient. The protein is NAD(P)H-quinone oxidoreductase subunit 3, chloroplastic of Buxus microphylla (Littleleaf boxwood).